Reading from the N-terminus, the 143-residue chain is Transcriptional regulator MraZ (143 aa).

SpoVT-AbrB domains lie at 5–47 and 76–119; these read EYQH…PMSE and ATEC…SKEI.

This sequence belongs to the MraZ family. As to quaternary structure, forms oligomers.

The protein resides in the cytoplasm. Its subcellular location is the nucleoid. This chain is Transcriptional regulator MraZ, found in Bacillus licheniformis (strain ATCC 14580 / DSM 13 / JCM 2505 / CCUG 7422 / NBRC 12200 / NCIMB 9375 / NCTC 10341 / NRRL NRS-1264 / Gibson 46).